A 207-amino-acid polypeptide reads, in one-letter code: MSKVLIVDDHPAIRLAVRLLFERDGFTIVGEADNGAEALQVARKKSPDLAILDIGIPKIDGLEVIARLKSLKLDTKVLVLTRQNPAQFAPRCLQAGAMGFVSKRENLSELLLAAKAVLAGYIHFPTGALRSINQQSRDNEARMLESLSDREMTVLQYLANGNTNKAIAQQLFLSEKTVSTYKSRIMLKLNAHSLAGLIDFARRHELI.

Positions 3–118 (KVLIVDDHPA…ELLLAAKAVL (116 aa)) constitute a Response regulatory domain. Residues Asp-9 and Asp-53 each carry the 4-aspartylphosphate modification. The 66-residue stretch at 140-205 (EARMLESLSD…GLIDFARRHE (66 aa)) folds into the HTH luxR-type domain. Positions 155–174 (LQYLANGNTNKAIAQQLFLS) form a DNA-binding region, H-T-H motif.

Its function is as follows. Probable transcriptional regulator. The chain is Putative transcriptional regulator from Pseudomonas aeruginosa (strain ATCC 15692 / DSM 22644 / CIP 104116 / JCM 14847 / LMG 12228 / 1C / PRS 101 / PAO1).